Reading from the N-terminus, the 279-residue chain is Fatty acid elongase 2 (279 aa).

The next 7 membrane-spanning stretches (helical) occupy residues 16–36 (LMLE…ALVW), 61–81 (AIIV…IVVV), 112–132 (FWIG…MFLL), 138–158 (PPFL…HTYC), 164–184 (MVLF…YFAM), 196–216 (FAPF…LVTT), and 242–262 (MGVI…LNSY). Positions 142-146 (HWYHH) match the HxxHH motif motif. Histidine 145 acts as the Nucleophile in catalysis.

Belongs to the ELO family.

It is found in the endoplasmic reticulum membrane. The enzyme catalyses an acyl-CoA + malonyl-CoA + H(+) = a 3-oxoacyl-CoA + CO2 + CoA. The protein operates within lipid metabolism; fatty acid biosynthesis. In terms of biological role, involved in the synthesis of fatty acids. Elongates C10 fatty acids to C14. Required for the maintenance of the global lipidome profile in this parasite. In Trypanosoma cruzi (strain CL Brener), this protein is Fatty acid elongase 2.